The following is a 474-amino-acid chain: Tumor necrosis factor receptor superfamily member 1B (474 aa).

The first 22 residues, 1 to 22 (MAPAALWVALVVELQLWATGHT), serve as a signal peptide directing secretion. The Extracellular portion of the chain corresponds to 23 to 258 (VPAKVVLTPY…PIIEPSITGG (236 aa)). Residue Thr-30 is glycosylated (O-linked (GalNAc...) threonine). 4 TNFR-Cys repeats span residues 39 to 77 (QCQI…TVCA), 78 to 119 (DCAA…NRVC), 120 to 164 (ACNA…VICS), and 165 to 203 (ACAP…AVCA). 10 disulfide bridges follow: Cys-40–Cys-54, Cys-55–Cys-68, Cys-58–Cys-76, Cys-79–Cys-94, Cys-97–Cys-111, Cys-101–Cys-119, Cys-121–Cys-127, Cys-136–Cys-145, Cys-139–Cys-163, and Cys-166–Cys-181. An N-linked (GlcNAc...) asparagine glycan is attached at Asn-69. N-linked (GlcNAc...) asparagine glycosylation is present at Asn-110. Asn-195 carries an N-linked (GlcNAc...) asparagine glycan. Thr-208 and Thr-224 each carry an O-linked (GalNAc...) threonine glycan. Residues 220–239 (QPEPTRSQPMDQEPGPSQTP) show a composition bias toward polar residues. The interval 220–241 (QPEPTRSQPMDQEPGPSQTPHI) is disordered. Residues 259-288 (ISLPIGLIVGLTTLGLLMLGLANCFILVQR) traverse the membrane as a helical segment. Residues 289–474 (KKKPSCLQRE…WYDQIAVKVP (186 aa)) are Cytoplasmic-facing. 2 disordered regions span residues 321–378 (LTTA…GSHG) and 397–464 (SQCS…NQPG). Low complexity-rich tracts occupy residues 324–338 (APSS…SASA) and 366–378 (GSRS…GSHG). Position 331 is a phosphoserine (Ser-331). Residues 429 to 442 (ECPSQSQWETTETL) show a composition bias toward polar residues.

As to quaternary structure, binds to TRAF2. Interacts with BMX. Interacts (activated form) with XPNPEP3.

The protein resides in the membrane. Its function is as follows. Receptor with high affinity for TNFSF2/TNF-alpha and approximately 5-fold lower affinity for homotrimeric TNFSF1/lymphotoxin-alpha. The TRAF1/TRAF2 complex recruits the apoptotic suppressors BIRC2 and BIRC3 to TNFRSF1B/TNFR2. This is Tumor necrosis factor receptor superfamily member 1B (Tnfrsf1b) from Rattus norvegicus (Rat).